The chain runs to 604 residues: Elongation factor 4 (604 aa).

A tr-type G domain is found at 10–191 (KNIRNFSIIA…KIITTIPAPS (182 aa)). GTP-binding positions include 22–27 (DHGKST) and 138–141 (NKID).

This sequence belongs to the TRAFAC class translation factor GTPase superfamily. Classic translation factor GTPase family. LepA subfamily.

It localises to the cell inner membrane. It catalyses the reaction GTP + H2O = GDP + phosphate + H(+). Its function is as follows. Required for accurate and efficient protein synthesis under certain stress conditions. May act as a fidelity factor of the translation reaction, by catalyzing a one-codon backward translocation of tRNAs on improperly translocated ribosomes. Back-translocation proceeds from a post-translocation (POST) complex to a pre-translocation (PRE) complex, thus giving elongation factor G a second chance to translocate the tRNAs correctly. Binds to ribosomes in a GTP-dependent manner. The chain is Elongation factor 4 from Helicobacter pylori (strain P12).